A 311-amino-acid polypeptide reads, in one-letter code: Malate dehydrogenase (311 aa).

Residues 7–13 (GAAGGIG) and D34 contribute to the NAD(+) site. Substrate-binding residues include R81 and R87. NAD(+) is bound by residues N94 and 117–119 (ITN). Substrate is bound by residues N119 and R153. The Proton acceptor role is filled by H177. NAD(+) is bound at residue M227.

Belongs to the LDH/MDH superfamily. MDH type 1 family. In terms of assembly, homodimer.

The enzyme catalyses (S)-malate + NAD(+) = oxaloacetate + NADH + H(+). Functionally, catalyzes the reversible oxidation of malate to oxaloacetate. This chain is Malate dehydrogenase, found in Haemophilus influenzae (strain PittEE).